The chain runs to 390 residues: Putative gustatory receptor 59d (390 aa).

Residues 1–38 (MADLLKLCLRIAYAYGRLTGVINFKIDLKTGQALVTRG) lie on the Cytoplasmic side of the membrane. A helical membrane pass occupies residues 39 to 59 (ATLISVSTHLLIFALLLYQTM). Residues 60 to 75 (RKSVVNVMWKYANSLH) lie on the Extracellular side of the membrane. The chain crosses the membrane as a helical span at residues 76 to 96 (EYVFLVIAGFRVVCVFLELVS). Residues 97–128 (RWSQRRTFVRLFNSFRRLYQRNPDIIQYCRRS) lie on the Cytoplasmic side of the membrane. A helical transmembrane segment spans residues 129–149 (IVSKFFCVTMTETLHIIVTLA). The Extracellular portion of the chain corresponds to 150–156 (MMRNRLS). A helical transmembrane segment spans residues 157 to 177 (IALALRIWAVLSLTAIINVII). Residues 178-252 (TQYYVATACV…NLSTAYEGEV (75 aa)) lie on the Cytoplasmic side of the membrane. Residues 253 to 273 (VCLVITYYLNMLGTSYLLFSI) traverse the membrane as a helical segment. The Extracellular segment spans residues 274 to 283 (SKYGNFGNNL). A helical membrane pass occupies residues 284-304 (LVIITLCGIVYFVFYVVDCWI). At 305–366 (NAFNVFYLLD…MYGLFEFGRG (62 aa)) the chain is on the cytoplasmic side. The chain crosses the membrane as a helical span at residues 367–383 (TSFAVFNSLLTHSLLLI). Over 384–390 (QYDVQNF) the chain is Extracellular.

It belongs to the insect chemoreceptor superfamily. Gustatory receptor (GR) family. Gr22e subfamily. As to expression, expressed in the adult labellar chemosensory neurons. In larvae, is expressed in neurons of the terminal external chemosensory organ as well as in the dorsal pharyngeal sense organ.

The protein resides in the cell membrane. Probable gustatory receptor which mediates acceptance or avoidance behavior, depending on its substrates. The protein is Putative gustatory receptor 59d (Gr59d) of Drosophila melanogaster (Fruit fly).